Here is a 125-residue protein sequence, read N- to C-terminus: Fluoride-specific ion channel FluC (125 aa).

The next 4 membrane-spanning stretches (helical) occupy residues 1-21 (MFAT…ARYG), 34-54 (FPWA…FLFF), 72-92 (TGGL…LVLF), and 101-121 (LLYM…GAWI). Na(+) contacts are provided by Gly76 and Thr79.

The protein belongs to the fluoride channel Fluc/FEX (TC 1.A.43) family.

The protein localises to the cell inner membrane. It carries out the reaction fluoride(in) = fluoride(out). With respect to regulation, na(+) is not transported, but it plays an essential structural role and its presence is essential for fluoride channel function. Functionally, fluoride-specific ion channel. Important for reducing fluoride concentration in the cell, thus reducing its toxicity. This chain is Fluoride-specific ion channel FluC, found in Acidithiobacillus ferrooxidans (strain ATCC 23270 / DSM 14882 / CIP 104768 / NCIMB 8455) (Ferrobacillus ferrooxidans (strain ATCC 23270)).